The following is a 489-amino-acid chain: uncharacterized protein (489 aa).

Position 26 is a phosphothreonine (T26). S27 carries the phosphoserine modification. 3 helical membrane-spanning segments follow: residues I63 to A83, L182 to A202, and V221 to L241. 3 disordered regions span residues P260–E312, S401–S435, and P450–H489. S263 is subject to Phosphoserine. Positions Q268 to N282 are enriched in polar residues. Polar residues predominate over residues P450–N465. The span at S477–H489 shows a compositional bias: low complexity.

Its subcellular location is the endoplasmic reticulum membrane. This is an uncharacterized protein from Schizosaccharomyces pombe (strain 972 / ATCC 24843) (Fission yeast).